The sequence spans 195 residues: Imidazoleglycerol-phosphate dehydratase (195 aa).

The protein belongs to the imidazoleglycerol-phosphate dehydratase family.

It is found in the cytoplasm. The catalysed reaction is D-erythro-1-(imidazol-4-yl)glycerol 3-phosphate = 3-(imidazol-4-yl)-2-oxopropyl phosphate + H2O. It functions in the pathway amino-acid biosynthesis; L-histidine biosynthesis; L-histidine from 5-phospho-alpha-D-ribose 1-diphosphate: step 6/9. The protein is Imidazoleglycerol-phosphate dehydratase of Bordetella bronchiseptica (strain ATCC BAA-588 / NCTC 13252 / RB50) (Alcaligenes bronchisepticus).